Consider the following 348-residue polypeptide: Maintenance of mitochondrial morphology protein 1 (348 aa).

The Lumenal segment spans residues 1–35 (MAGKADLGHTGISDNIVERQIFVPQPNNAWSFTQG). Residues 36 to 56 (LMCGQASVVVVLLVFIKFFVF) form a helical membrane-spanning segment. Residues 57–348 (SEAPPSSGAA…GKTEKVNGNE (292 aa)) are Cytoplasmic-facing. In terms of domain architecture, SMP-LTD spans 114–323 (NPESLDWFNV…EPKFQVVRLP (210 aa)). The disordered stretch occupies residues 328–348 (RSKNTREPVGAGKTEKVNGNE).

Belongs to the MMM1 family. Homodimer. Component of the ER-mitochondria encounter structure (ERMES) or MDM complex, composed of MMM1, MDM10, MDM12 and MDM34. An MMM1 homodimer associates with one molecule of MDM12 on each side in a pairwise head-to-tail manner, and the SMP-LTD domains of MMM1 and MDM12 generate a continuous hydrophobic tunnel for phospholipid trafficking.

The protein resides in the endoplasmic reticulum membrane. In terms of biological role, component of the ERMES/MDM complex, which serves as a molecular tether to connect the endoplasmic reticulum (ER) and mitochondria. Components of this complex are involved in the control of mitochondrial shape and protein biogenesis, and function in nonvesicular lipid trafficking between the ER and mitochondria. The MDM12-MMM1 subcomplex functions in the major beta-barrel assembly pathway that is responsible for biogenesis of all outer membrane beta-barrel proteins, and acts in a late step after the SAM complex. The MDM10-MDM12-MMM1 subcomplex further acts in the TOM40-specific pathway after the action of the MDM12-MMM1 complex. Essential for establishing and maintaining the structure of mitochondria and maintenance of mtDNA nucleoids. This is Maintenance of mitochondrial morphology protein 1 from Clavispora lusitaniae (strain ATCC 42720) (Yeast).